The following is a 380-amino-acid chain: Cytochrome b (380 aa).

4 helical membrane-spanning segments follow: residues 34-54 (FGSL…LLAA), 78-99 (WLIR…YLHI), 114-134 (WNTG…GYVL), and 179-199 (FFTL…IHLT). Positions 84 and 98 each coordinate heme b. The heme b site is built by His183 and His197. A ubiquinone is bound at residue His202. The next 4 membrane-spanning stretches (helical) occupy residues 227–247 (LKDI…ALFS), 289–309 (LGGV…PLLH), 321–341 (FSQL…WVGS), and 348–368 (FIII…ILFP).

Belongs to the cytochrome b family. As to quaternary structure, the cytochrome bc1 complex contains 11 subunits: 3 respiratory subunits (MT-CYB, CYC1 and UQCRFS1), 2 core proteins (UQCRC1 and UQCRC2) and 6 low-molecular weight proteins (UQCRH/QCR6, UQCRB/QCR7, UQCRQ/QCR8, UQCR10/QCR9, UQCR11/QCR10 and a cleavage product of UQCRFS1). This cytochrome bc1 complex then forms a dimer. Heme b is required as a cofactor.

Its subcellular location is the mitochondrion inner membrane. Its function is as follows. Component of the ubiquinol-cytochrome c reductase complex (complex III or cytochrome b-c1 complex) that is part of the mitochondrial respiratory chain. The b-c1 complex mediates electron transfer from ubiquinol to cytochrome c. Contributes to the generation of a proton gradient across the mitochondrial membrane that is then used for ATP synthesis. The chain is Cytochrome b (MT-CYB) from Antigone vipio (White-naped crane).